Here is a 145-residue protein sequence, read N- to C-terminus: Pseudoazurin (145 aa).

Residues 1–22 form the signal peptide; sequence MFHHSLAAAAAALLALAAPGFA. The 89-residue stretch at 27-115 folds into the Plastocyanin-like domain; the sequence is VHMLNKGESG…MGMVGLVQVG (89 aa). Cu cation contacts are provided by His-62, Cys-100, His-103, and Met-108. A disordered region spans residues 126–145; the sequence is TAKMPKKARERMDAELAQVN.

As to quaternary structure, homodimer. Cu cation serves as cofactor.

It localises to the periplasm. This soluble electron transfer copper protein is required for the inactivation of copper-containing nitrite reductase in the presence of oxygen. In Paracoccus pantotrophus (Thiosphaera pantotropha), this protein is Pseudoazurin (pazS).